Here is a 20-residue protein sequence, read N- to C-terminus: Short cationic peptide-4c (20 aa).

Glutamate 20 is modified (glutamic acid 1-amide).

As to expression, expressed by the venom gland.

Its subcellular location is the secreted. The protein is Short cationic peptide-4c of Cupiennius salei (American wandering spider).